A 317-amino-acid polypeptide reads, in one-letter code: Ribonuclease Z (317 aa).

Zn(2+) is bound by residues histidine 62, histidine 64, aspartate 66, histidine 67, histidine 139, aspartate 210, and histidine 268. The active-site Proton acceptor is the aspartate 66.

This sequence belongs to the RNase Z family. Homodimer. Zn(2+) is required as a cofactor.

It catalyses the reaction Endonucleolytic cleavage of RNA, removing extra 3' nucleotides from tRNA precursor, generating 3' termini of tRNAs. A 3'-hydroxy group is left at the tRNA terminus and a 5'-phosphoryl group is left at the trailer molecule.. Zinc phosphodiesterase, which displays some tRNA 3'-processing endonuclease activity. Probably involved in tRNA maturation, by removing a 3'-trailer from precursor tRNA. This Picosynechococcus sp. (strain ATCC 27264 / PCC 7002 / PR-6) (Agmenellum quadruplicatum) protein is Ribonuclease Z.